A 124-amino-acid chain; its full sequence is Ribonuclease pancreatic (124 aa).

The span at 1 to 13 shows a compositional bias: basic and acidic residues; the sequence is KESAAAKFERQHM. Residues 1 to 25 are disordered; sequence KESAAAKFERQHMDPSPSSASSSNY. Substrate contacts are provided by Lys-7 and Arg-10. The active-site Proton acceptor is His-12. Intrachain disulfides connect Cys-26/Cys-84, Cys-40/Cys-95, Cys-58/Cys-110, and Cys-65/Cys-72. N-linked (GlcNAc...) asparagine; partial glycosylation is present at Asn-34. Residues 41 to 45, Lys-66, and Arg-85 each bind substrate; that span reads KPVNT. His-119 acts as the Proton donor in catalysis.

It belongs to the pancreatic ribonuclease family. Monomer. Interacts with and forms tight 1:1 complexes with RNH1. Dimerization of two such complexes may occur. Interaction with RNH1 inhibits this protein. In terms of tissue distribution, pancreas.

Its subcellular location is the secreted. The enzyme catalyses an [RNA] containing cytidine + H2O = an [RNA]-3'-cytidine-3'-phosphate + a 5'-hydroxy-ribonucleotide-3'-[RNA].. It catalyses the reaction an [RNA] containing uridine + H2O = an [RNA]-3'-uridine-3'-phosphate + a 5'-hydroxy-ribonucleotide-3'-[RNA].. Endonuclease that catalyzes the cleavage of RNA on the 3' side of pyrimidine nucleotides. Acts on single-stranded and double-stranded RNA. This is Ribonuclease pancreatic (RNASE1) from Capreolus capreolus (European roe deer).